Reading from the N-terminus, the 160-residue chain is Protein-export protein SecB (160 aa).

It belongs to the SecB family. In terms of assembly, homotetramer, a dimer of dimers. One homotetramer interacts with 1 SecA dimer.

The protein resides in the cytoplasm. Functionally, one of the proteins required for the normal export of preproteins out of the cell cytoplasm. It is a molecular chaperone that binds to a subset of precursor proteins, maintaining them in a translocation-competent state. It also specifically binds to its receptor SecA. The chain is Protein-export protein SecB from Burkholderia multivorans (strain ATCC 17616 / 249).